The following is a 471-amino-acid chain: MPN domain-containing protein (471 aa).

The span at 1–10 (MAAPEPLSPA) shows a compositional bias: low complexity. A disordered region spans residues 1-63 (MAAPEPLSPA…GGGGAGAGGC (63 aa)). Ala2 carries the N-acetylalanine modification. Phosphoserine is present on Ser8. A compositionally biased stretch (acidic residues) spans 16–29 (EAPEEDEDEAEAED). The segment covering 36–63 (GAGGGRSGGGGSSVSGGGGGGGAGAGGC) has biased composition (gly residues). In terms of domain architecture, RAMA spans 71-166 (TRRAVTLRVL…KYKATWLRLH (96 aa)). The DNA site is built by Ser123, Ser125, and Trp145. The disordered stretch occupies residues 170–229 (TPATAADESPASEGEEEELLMEEEEEDVLAGVSAEDKSRRPLGKSPSEPAHPEATTPGKR). Phosphoserine is present on residues Ser178 and Ser181. Residues 182 to 197 (EGEEEELLMEEEEEDV) are compositionally biased toward acidic residues. An MPN domain is found at 272 to 407 (VAVSSNVLFL…PESKISPFWV (136 aa)). The Zn(2+) site is built by His349, His351, and Asp362. A JAMM motif motif is present at residues 349 to 362 (HSHPHSPALPSLQD).

The protein belongs to the peptidase M67 family. In terms of assembly, monomer. Mainly monomoric, but when binds to dsDNA, forms homotetramer assembled into two homodimers. May interact with histones; this interaction is facilitated by dsDNA binding. Post-translationally, degraded following binding to N(6)-methyladenosine methylated DNA (m6A).

Probable protease. Acts as a sensor of N(6)-methyladenosine methylation on DNA (m6A): recognizes and binds m6A DNA, leading to its degradation. Binds only double strand DNA (dsDNA) in a sequence-independent manner. The sequence is that of MPN domain-containing protein from Homo sapiens (Human).